A 236-amino-acid chain; its full sequence is MEKPDPKVIVAIDAGTVEQARAQINPLTPELCHLKIGSILFTRYGPAFVEELMQKGYRIFLDLKFYDIPQTVAGACRAVAELGVWMMNIHISGGRTMMETVVNALQSITLKEKPLLIGVTILTSLDGSDLKTLGIQEKVPDIVCRMATLAKSAGLDGVVCSAQEAALLRKQFDRNFLLVTPGIRLETDEKGDQKRVMTPRAAIQAGSDYLVIGRPITQSTDPLKALEAIDKDIKTR.

Residues Asp13, Lys35, 62-71 (DLKFYDIPQT), Thr123, Arg184, Gln193, Gly213, and Arg214 contribute to the substrate site. Catalysis depends on Lys64, which acts as the Proton donor.

This sequence belongs to the OMP decarboxylase family. Type 1 subfamily. Homodimer.

It catalyses the reaction orotidine 5'-phosphate + H(+) = UMP + CO2. It participates in pyrimidine metabolism; UMP biosynthesis via de novo pathway; UMP from orotate: step 2/2. Functionally, catalyzes the decarboxylation of orotidine 5'-monophosphate (OMP) to uridine 5'-monophosphate (UMP). The polypeptide is Orotidine 5'-phosphate decarboxylase (Coxiella burnetii (strain CbuK_Q154) (Coxiella burnetii (strain Q154))).